An 89-amino-acid chain; its full sequence is Arminin 375 (89 aa).

The signal sequence occupies residues 1–18; sequence MKAVFAILFLAFIALTYA. The propeptide occupies 19 to 57; the sequence is KSYDEVKEEIKNEVEREIFEDLEEESDELDNYVEESNDA. The residue at position 86 (Ala86) is an Alanine amide.

The protein belongs to the arminin family. As to expression, expressed in entodermal epithelium along the body column.

Its subcellular location is the secreted. It is found in the target cell membrane. In terms of biological role, antimicrobial peptide with a broad-spectrum antimicrobial activity. Keeps its antibacterial activity under a wide range of salt concentrations that mimic physiological conditions of human blood, which is surprising, since Hydra is an obligate freshwater animal with nearly no salt tolerance. Does not affect red blood cells. The sequence is that of Arminin 375 from Hydra oligactis (Brown hydra).